The following is a 527-amino-acid chain: Pyruvate kinase 1, cytosolic (527 aa).

Arginine 58 is a binding site for substrate. Residues aspartate 60, serine 62, aspartate 92, and threonine 93 each contribute to the K(+) site. 60–63 (DFSW) provides a ligand contact to ATP. Residue lysine 256 coordinates substrate. Glutamate 258 provides a ligand contact to Mg(2+). Substrate contacts are provided by glycine 281, asparagine 282, and threonine 313. Asparagine 282 is a binding site for Mg(2+).

This sequence belongs to the pyruvate kinase family. As to quaternary structure, homotetramer. The cofactor is Mg(2+). It depends on K(+) as a cofactor.

It localises to the cytoplasm. The protein resides in the cytosol. It carries out the reaction pyruvate + ATP = phosphoenolpyruvate + ADP + H(+). Its pathway is carbohydrate degradation; glycolysis; pyruvate from D-glyceraldehyde 3-phosphate: step 5/5. Functionally, key regulatory enzyme of the glycolytic pathway that catalyzes the final step of glycolysis, converting ADP and phosphoenolpyruvate (PEP) to ATP and pyruvate by essentially irreversible transphosphorylation. Is critical for plant growth and development. This is Pyruvate kinase 1, cytosolic from Oryza sativa subsp. indica (Rice).